A 359-amino-acid chain; its full sequence is Type-1 angiotensin II receptor (359 aa).

Over 1-25 (MILNSSTEDGIKRIQDDCPKAGRHN) the chain is Extracellular. An N-linked (GlcNAc...) asparagine glycan is attached at Asn-4. Angiotensin II contacts are provided by Gln-15 and Asp-17. Disulfide bonds link Cys-18–Cys-274 and Cys-101–Cys-180. The chain crosses the membrane as a helical span at residues 26 to 55 (YIFVMIPTLYSIIFVVGIFGNSLVVIVIYF). At 56-61 (YMKLKT) the chain is on the cytoplasmic side. Residues 62 to 89 (VASVFLLNLALADLCFLLTLPLWAVYTA) form a helical membrane-spanning segment. Residues 90-98 (MEYRWPFGN) are Extracellular-facing. The chain crosses the membrane as a helical span at residues 99–125 (YLCKIASASVSFNLYASVFLLTCLSID). The Cytoplasmic portion of the chain corresponds to 126-141 (RYVAIVHPMKSPVRRT). The helical transmembrane segment at 142–165 (MLMAKVTCIIIWLLAGLASLPTII) threads the bilayer. Residues 166–190 (HRNVFFIENTNITVCAFHYESQNST) are Extracellular-facing. Arg-167 is a binding site for angiotensin II. An N-linked (GlcNAc...) asparagine glycan is attached at Asn-176. 3 residues coordinate angiotensin II: Phe-182, His-183, and Tyr-184. N-linked (GlcNAc...) asparagine glycosylation is present at Asn-188. The chain crosses the membrane as a helical span at residues 191–216 (LPIGLGLTKNILGFLFPFLIILTSYT). Residue Lys-199 participates in angiotensin II binding. Topologically, residues 217 to 239 (LIWKTLKRAYEIQKNKPRNDDIF) are cytoplasmic. Residues 240–268 (KIIMAIVLFFFFSWVPHQIFTFLDVLIQL) form a helical membrane-spanning segment. At 269-278 (GIIHDCKIAD) the chain is on the extracellular side. Residues 279 to 304 (IVDTAMPITICIAYFNNCLNPLFYGF) traverse the membrane as a helical segment. At 305-359 (LGKKFKKYFLQLLKYIPPKAKSHSSLSTKMSTLSYRPSDHGNASTKKSASCVEVE) the chain is on the cytoplasmic side. Positions 335–352 (STLSYRPSDHGNASTKKS) are enriched in polar residues. The segment at 335-359 (STLSYRPSDHGNASTKKSASCVEVE) is disordered. Residue Cys-355 is the site of S-palmitoyl cysteine attachment.

It belongs to the G-protein coupled receptor 1 family. In terms of assembly, interacts with MAS1. Interacts with ARRB1. Interacts with FLNA (via filamin repeat 21); increases PKA-mediated phosphorylation of FLNA. Post-translationally, C-terminal Ser or Thr residues may be phosphorylated. In terms of tissue distribution, adrenal, liver, aorta, kidney, lung, testis and heart.

The protein localises to the cell membrane. Functionally, receptor for angiotensin II, a vasoconstricting peptide, which acts as a key regulator of blood pressure and sodium retention by the kidney. The activated receptor in turn couples to G-alpha proteins G(q) (GNAQ, GNA11, GNA14 or GNA15) and thus activates phospholipase C and increases the cytosolic Ca(2+) concentrations, which in turn triggers cellular responses such as stimulation of protein kinase C. This Canis lupus familiaris (Dog) protein is Type-1 angiotensin II receptor (AGTR1).